The primary structure comprises 240 residues: Manganese transport system ATP-binding protein MntB (240 aa).

The 233-residue stretch at 1–233 (MEIQGLTIAY…KIQFAYGDAP (233 aa)) folds into the ABC transporter domain. 33 to 40 (GPNGAGKS) is an ATP binding site.

This sequence belongs to the ABC transporter superfamily.

It is found in the cell membrane. Its function is as follows. This protein is probably a component of a manganese permease, a binding protein-dependent, ATP-driven transport system. Probably responsible for energy coupling to the transport system. The sequence is that of Manganese transport system ATP-binding protein MntB (mntB) from Listeria monocytogenes serovar 1/2a (strain ATCC BAA-679 / EGD-e).